A 110-amino-acid chain; its full sequence is UPF0060 membrane protein Noc_2955 (110 aa).

Transmembrane regions (helical) follow at residues 7–27 (VGLF…AYLW), 33–53 (TIWL…LLSL), 63–83 (AAYG…VNGI), and 87–107 (TWDL…MFAP).

The protein belongs to the UPF0060 family.

It localises to the cell inner membrane. In Nitrosococcus oceani (strain ATCC 19707 / BCRC 17464 / JCM 30415 / NCIMB 11848 / C-107), this protein is UPF0060 membrane protein Noc_2955.